We begin with the raw amino-acid sequence, 483 residues long: SWI/SNF-related matrix-associated actin-dependent regulator of chromatin subfamily D member 3 (483 aa).

N-acetylalanine is present on Ala2. The interval 26 to 102 is disordered; that stretch reads VRPGMPSGAR…ARSRSAKRRK (77 aa). The segment covering 78–87 has biased composition (low complexity); it reads QSQAQSQGQP. At Ser178 the chain carries Phosphoserine. An SWIB/MDM2 domain is found at 258 to 335; the sequence is YQPPQFKLDP…PQRLTALLLP (78 aa).

It belongs to the SMARCD family. As to quaternary structure, component of the multiprotein chromatin-remodeling complexes SWI/SNF: SWI/SNF-A (BAF), SWI/SNF-B (PBAF) and related complexes. The canonical complex contains a catalytic subunit (either SMARCA4/BRG1/BAF190A or SMARCA2/BRM/BAF190B) and at least SMARCE1, ACTL6A/BAF53, SMARCC1/BAF155, SMARCC2/BAF170, and SMARCB1/SNF5/BAF47. Other subunits specific to each of the complexes may also be present permitting several possible combinations developmentally and tissue specific. Component of the BAF complex, which includes at least actin (ACTB), ARID1A/BAF250A, ARID1B/BAF250B, SMARCA2/BRM, SMARCA4/BRG1/BAF190A, ACTL6A/BAF53, ACTL6B/BAF53B, SMARCE1/BAF57, SMARCC1/BAF155, SMARCC2/BAF170, SMARCB1/SNF5/INI1, and one or more SMARCD1/BAF60A, SMARCD2/BAF60B, or SMARCD3/BAF60C. In muscle cells, the BAF complex also contains DPF3. Component of neural progenitors-specific chromatin remodeling complex (npBAF complex) composed of at least, ARID1A/BAF250A or ARID1B/BAF250B, SMARCD1/BAF60A, SMARCD3/BAF60C, SMARCA2/BRM/BAF190B, SMARCA4/BRG1/BAF190A, SMARCB1/BAF47, SMARCC1/BAF155, SMARCE1/BAF57, SMARCC2/BAF170, PHF10/BAF45A, ACTL6A/BAF53A and actin. Component of neuron-specific chromatin remodeling complex (nBAF complex) composed of at least, ARID1A/BAF250A or ARID1B/BAF250B, SMARCD1/BAF60A, SMARCD3/BAF60C, SMARCA2/BRM/BAF190B, SMARCA4/BRG1/BAF190A, SMARCB1/BAF47, SMARCC1/BAF155, SMARCE1/BAF57, SMARCC2/BAF170, DPF1/BAF45B, DPF3/BAF45C, ACTL6B/BAF53B and actin. May be a component of the SWI/SNF-B (PBAF) chromatin remodeling complex, at least composed of SMARCA4/BRG1, SMARCB1/BAF47/SNF5, ACTL6A/BAF53A or ACTL6B/BAF53B, SMARCE1/BAF57, SMARCD1/BAF60A, SMARCD2/BAF60B, perhaps SMARCD3/BAF60C, SMARCC1/BAF155, SMARCC2/BAF170, PBRM1/BAF180, ARID2/BAF200 and actin. Interacts with SMARCA4/BRG1/BAF190A. Component of SWI/SNF (GBAF) subcomplex, which includes at least BICRA or BICRAL (mutually exclusive), BRD9, SS18, SMARCA2/BRM, SMARCA4/BRG1/BAF190A, ACTL6A/BAF53, SMARCC1/BAF155, and SMARCD1/BAF60A. The precise distribution of the related SMARCD1, SMARCD2 and SMARCD3 proteins among these and other SWI/SNF nucleosome-remodeling complexes is not fully known. May allow recruitment of SWI/SNF containing complexes specifically to promoters where these factors are located. Also interacts with several nuclear receptors including PPARG/NR1C3, RXRA/NR1F1, ESR1, NR5A1, NR5A2/LRH1 and other transcriptional activators including the HLH protein SREBF1/SREBP1 and the homeobox protein PBX1. Interacts with PRDM1/BLIMP1. Isoform 2 and isoform 1 are expressed in brain, heart, kidney, placenta, prostate, salivary gland, spleen, testis, thyroid, trachea and uterus. Isoform 1 is also expressed in skeletal muscle and adipose tissue.

It localises to the nucleus. Its function is as follows. Involved in transcriptional activation and repression of select genes by chromatin remodeling (alteration of DNA-nucleosome topology). Component of SWI/SNF chromatin remodeling complexes that carry out key enzymatic activities, changing chromatin structure by altering DNA-histone contacts within a nucleosome in an ATP-dependent manner. Stimulates nuclear receptor mediated transcription. Belongs to the neural progenitors-specific chromatin remodeling complex (npBAF complex) and the neuron-specific chromatin remodeling complex (nBAF complex). During neural development a switch from a stem/progenitor to a postmitotic chromatin remodeling mechanism occurs as neurons exit the cell cycle and become committed to their adult state. The transition from proliferating neural stem/progenitor cells to postmitotic neurons requires a switch in subunit composition of the npBAF and nBAF complexes. As neural progenitors exit mitosis and differentiate into neurons, npBAF complexes which contain ACTL6A/BAF53A and PHF10/BAF45A, are exchanged for homologous alternative ACTL6B/BAF53B and DPF1/BAF45B or DPF3/BAF45C subunits in neuron-specific complexes (nBAF). The npBAF complex is essential for the self-renewal/proliferative capacity of the multipotent neural stem cells. The nBAF complex along with CREST plays a role regulating the activity of genes essential for dendrite growth. The polypeptide is SWI/SNF-related matrix-associated actin-dependent regulator of chromatin subfamily D member 3 (SMARCD3) (Homo sapiens (Human)).